The following is a 274-amino-acid chain: Triosephosphate isomerase (274 aa).

Residue 13–15 (NWK) coordinates substrate. Residue His-98 is the Electrophile of the active site. Catalysis depends on Glu-170, which acts as the Proton acceptor. The substrate site is built by Gly-176 and Ser-216.

The protein belongs to the triosephosphate isomerase family. As to quaternary structure, homodimer.

It localises to the cytoplasm. The catalysed reaction is D-glyceraldehyde 3-phosphate = dihydroxyacetone phosphate. It participates in carbohydrate biosynthesis; gluconeogenesis. Its pathway is carbohydrate degradation; glycolysis; D-glyceraldehyde 3-phosphate from glycerone phosphate: step 1/1. In terms of biological role, involved in the gluconeogenesis. Catalyzes stereospecifically the conversion of dihydroxyacetone phosphate (DHAP) to D-glyceraldehyde-3-phosphate (G3P). In Onion yellows phytoplasma (strain OY-M), this protein is Triosephosphate isomerase.